We begin with the raw amino-acid sequence, 910 residues long: E3 ubiquitin-protein ligase HUL5 (910 aa).

Met1 bears the N-acetylmethionine mark. Positions 1–25 are disordered; sequence MLNFTGQTRRRNVNLGNRTRNSKKD. Positions 810 to 910 constitute an HECT domain; sequence YGGYKEEDQT…INSGARFDLS (101 aa). Cys878 acts as the Glycyl thioester intermediate in catalysis.

Belongs to the UBE3C family. Interacts with 19S proteasomes.

It localises to the cytoplasm. It is found in the cytosol. The protein resides in the nucleus. The enzyme catalyses S-ubiquitinyl-[E2 ubiquitin-conjugating enzyme]-L-cysteine + [acceptor protein]-L-lysine = [E2 ubiquitin-conjugating enzyme]-L-cysteine + N(6)-ubiquitinyl-[acceptor protein]-L-lysine.. The protein operates within protein modification; protein ubiquitination. Functionally, non-essential E3 ubiquitin-protein ligase that specifically catalyzes 'Lys-29'- and 'Lys-48'-linked polyubiquitin chains. Accepts ubiquitin from an E2 ubiquitin-conjugating enzyme in the form of a thioester and then directly transfers the ubiquitin to targeted substrates. Associates with the proteasome and promotes elongation of ubiquitin chains on substrates bound to the proteasome. Elongation of ubiquitin chains on substrates bound to the proteasome promotes proteasomal processivity. Also promotes ubiquitin elongation of 26S proteasome subunit RPN10. Involved in the stress response required to maintain cell fitness following heat-shock: acts by mediating ubiquitination of cytosolic misfolded proteins, leading to their subsequent degradation. In Saccharomyces cerevisiae (strain ATCC 204508 / S288c) (Baker's yeast), this protein is E3 ubiquitin-protein ligase HUL5.